The sequence spans 507 residues: uncharacterized protein (507 aa).

3 disordered regions span residues 91–162, 174–255, and 309–422; these read NEKT…KKLL, EKLQ…QQQQ, and KRKL…NYST. Residues 116–143 are compositionally biased toward acidic residues; it reads DSSESDSSESESDSSESESESESNETSE. Residues 144 to 155 show a composition bias toward low complexity; the sequence is NESSSSSEPESS. The span at 174-193 shows a compositional bias: basic and acidic residues; that stretch reads EKLQQEQQKQKEAQKPKEKP. Composition is skewed to low complexity over residues 194-236, 243-255, and 313-350; these read QQQQ…QQIE, PQQQ…QQQQ, and QSQL…TNKP. Residues 351–360 show a composition bias toward basic residues; that stretch reads LSKRQKKLLK. Low complexity predominate over residues 378–409; it reads NNKNDNSTNDSNNNNDNNNNNKNDTNDSNNDD.

This is an uncharacterized protein from Dictyostelium discoideum (Social amoeba).